The chain runs to 758 residues: G-protein alpha subunit activating protein gbas-1 (758 aa).

Over residues 30 to 48 (LDEVDNADFEREDDEEEVL) the composition is skewed to acidic residues. Residues 30–70 (LDEVDNADFEREDDEEEVLSEPSESPYTSTPKSSKRVNKTR) are disordered. A compositionally biased stretch (low complexity) spans 49–61 (SEPSESPYTSTPK). The short motif at 653 to 666 (ETVTVEEFLMNSYS) is the GBA element. A disordered region spans residues 668 to 690 (AAPSTSTAPAPPKAPVTAPPAPQ). Residues 676–689 (PAPPKAPVTAPPAP) are compositionally biased toward pro residues.

As to quaternary structure, interacts (via GBA motif) with guanine nucleotide-binding protein G(o) subunit alpha goa-1 (in GDP-bound form); the interaction leads to activation of goa-1. As to expression, expressed in some neurons including the head and tail neurons, HSN and VC, in a subset of glial cells, in the distal tips cells and in the intestine.

In terms of biological role, acts as a non-receptor guanine nucleotide exchange factor which binds to and activates G-protein alpha subunit goa-1. The sequence is that of G-protein alpha subunit activating protein gbas-1 from Caenorhabditis elegans.